The primary structure comprises 334 residues: Holliday junction branch migration complex subunit RuvB (334 aa).

The segment at 4 to 186 (ADRLIAPISN…FGIVQRLEYY (183 aa)) is large ATPase domain (RuvB-L). Residues Ile-25, Arg-26, Gly-67, Lys-70, Thr-71, Thr-72, 133 to 135 (EDY), Arg-176, Tyr-186, and Arg-223 contribute to the ATP site. Thr-71 contacts Mg(2+). Residues 187–257 (KVADLQHIVQ…TADRALNMLD (71 aa)) form a small ATPAse domain (RuvB-S) region. The head domain (RuvB-H) stretch occupies residues 260–334 (HQGFDYMDRK…RAYLHFGIEK (75 aa)). The DNA site is built by Arg-315 and Arg-320.

Belongs to the RuvB family. As to quaternary structure, homohexamer. Forms an RuvA(8)-RuvB(12)-Holliday junction (HJ) complex. HJ DNA is sandwiched between 2 RuvA tetramers; dsDNA enters through RuvA and exits via RuvB. An RuvB hexamer assembles on each DNA strand where it exits the tetramer. Each RuvB hexamer is contacted by two RuvA subunits (via domain III) on 2 adjacent RuvB subunits; this complex drives branch migration. In the full resolvosome a probable DNA-RuvA(4)-RuvB(12)-RuvC(2) complex forms which resolves the HJ.

The protein resides in the cytoplasm. The enzyme catalyses ATP + H2O = ADP + phosphate + H(+). Functionally, the RuvA-RuvB-RuvC complex processes Holliday junction (HJ) DNA during genetic recombination and DNA repair, while the RuvA-RuvB complex plays an important role in the rescue of blocked DNA replication forks via replication fork reversal (RFR). RuvA specifically binds to HJ cruciform DNA, conferring on it an open structure. The RuvB hexamer acts as an ATP-dependent pump, pulling dsDNA into and through the RuvAB complex. RuvB forms 2 homohexamers on either side of HJ DNA bound by 1 or 2 RuvA tetramers; 4 subunits per hexamer contact DNA at a time. Coordinated motions by a converter formed by DNA-disengaged RuvB subunits stimulates ATP hydrolysis and nucleotide exchange. Immobilization of the converter enables RuvB to convert the ATP-contained energy into a lever motion, pulling 2 nucleotides of DNA out of the RuvA tetramer per ATP hydrolyzed, thus driving DNA branch migration. The RuvB motors rotate together with the DNA substrate, which together with the progressing nucleotide cycle form the mechanistic basis for DNA recombination by continuous HJ branch migration. Branch migration allows RuvC to scan DNA until it finds its consensus sequence, where it cleaves and resolves cruciform DNA. In Vibrio cholerae serotype O1 (strain ATCC 39541 / Classical Ogawa 395 / O395), this protein is Holliday junction branch migration complex subunit RuvB.